Consider the following 151-residue polypeptide: Globin-2 B chain (151 aa).

Residue serine 1 is modified to N-acetylserine. In terms of domain architecture, Globin spans 11 to 151; that stretch reads VSNADQKDLL…SLVAVVQASL (141 aa). A heme b-binding site is contributed by histidine 103.

This sequence belongs to the globin family. As to quaternary structure, heterotetramer of two alpha chains and two beta chains.

This Anadara inaequivalvis (Inequivalve ark) protein is Globin-2 B chain.